Here is a 377-residue protein sequence, read N- to C-terminus: Erythronate-4-phosphate dehydrogenase (377 aa).

Substrate contacts are provided by S45 and T67. Residues 127-128 (QV), D147, and T176 each bind NAD(+). R209 is a catalytic residue. An NAD(+)-binding site is contributed by D233. The active site involves E238. H255 serves as the catalytic Proton donor. Position 258 (G258) interacts with NAD(+). A substrate-binding site is contributed by Y259.

The protein belongs to the D-isomer specific 2-hydroxyacid dehydrogenase family. PdxB subfamily. In terms of assembly, homodimer.

The protein localises to the cytoplasm. The catalysed reaction is 4-phospho-D-erythronate + NAD(+) = (R)-3-hydroxy-2-oxo-4-phosphooxybutanoate + NADH + H(+). The protein operates within cofactor biosynthesis; pyridoxine 5'-phosphate biosynthesis; pyridoxine 5'-phosphate from D-erythrose 4-phosphate: step 2/5. In terms of biological role, catalyzes the oxidation of erythronate-4-phosphate to 3-hydroxy-2-oxo-4-phosphonooxybutanoate. The chain is Erythronate-4-phosphate dehydrogenase from Vibrio atlanticus (strain LGP32) (Vibrio splendidus (strain Mel32)).